Consider the following 364-residue polypeptide: Chorismate synthase (364 aa).

Positions 48 and 54 each coordinate NADP(+). Residues R130–S132, N242–A243, G287, K302–S306, and R328 contribute to the FMN site.

Belongs to the chorismate synthase family. Homotetramer. FMNH2 is required as a cofactor.

It carries out the reaction 5-O-(1-carboxyvinyl)-3-phosphoshikimate = chorismate + phosphate. Its pathway is metabolic intermediate biosynthesis; chorismate biosynthesis; chorismate from D-erythrose 4-phosphate and phosphoenolpyruvate: step 7/7. Functionally, catalyzes the anti-1,4-elimination of the C-3 phosphate and the C-6 proR hydrogen from 5-enolpyruvylshikimate-3-phosphate (EPSP) to yield chorismate, which is the branch point compound that serves as the starting substrate for the three terminal pathways of aromatic amino acid biosynthesis. This reaction introduces a second double bond into the aromatic ring system. This Allorhizobium ampelinum (strain ATCC BAA-846 / DSM 112012 / S4) (Agrobacterium vitis (strain S4)) protein is Chorismate synthase.